A 49-amino-acid chain; its full sequence is GIDPNYRTSRQVVGEHQGHKVYGPVDPPKVLGIHGTIVXVDFDLCIADG.

Residues 1–36 are N-terminal extension; sequence GIDPNYRTSRQVVGEHQGHKVYGPVDPPKVLGIHGT. His16 and His19 together coordinate Zn(2+). Lys29 is modified (N6-methyllysine). His34 contacts Zn(2+). Positions 37 to 49 are ferredoxin; it reads IVXVDFDLCIADG. Cys45 contributes to the [3Fe-4S] cluster binding site.

[3Fe-4S] cluster serves as cofactor. It depends on [4Fe-4S] cluster as a cofactor. Requires Zn(2+) as cofactor.

In terms of biological role, ferredoxins are iron-sulfur proteins that transfer electrons in a wide variety of metabolic reactions. In Acidianus infernus, this protein is Zinc-containing ferredoxin (zfx).